The primary structure comprises 240 residues: Late expression factor 5 homolog (240 aa).

The protein belongs to the baculoviridae LEF-5 family.

Required for late and very late gene expression. The polypeptide is Late expression factor 5 homolog (Tortricidae (ClGV)).